The following is a 426-amino-acid chain: Probable serine/threonine-protein kinase PBL3 (426 aa).

Residues 1–42 (MGNCLDSSAKVDSSSHSPHANSASLSSRVSSKTSRSTVPSSL) are disordered. The N-myristoyl glycine moiety is linked to residue G2. C4 is lipidated: S-palmitoyl cysteine. A compositionally biased stretch (low complexity) spans 7-42 (SSAKVDSSSHSPHANSASLSSRVSSKTSRSTVPSSL). T72 is modified (phosphothreonine). The Protein kinase domain occupies 83–366 (FRPDSLLGEG…SEVLAKLDQL (284 aa)). ATP contacts are provided by residues 89–97 (LGEGGFGYV) and K121. Y166 is subject to Phosphotyrosine. Catalysis depends on D216, which acts as the Proton acceptor. At S250 the chain carries Phosphoserine. 2 positions are modified to phosphothreonine: T251 and T256. Residue Y264 is modified to Phosphotyrosine. The span at 367–394 (ESTKPGTGVGNRQAQIDSPRGSNGSIVQ) shows a compositional bias: polar residues. The disordered stretch occupies residues 367–426 (ESTKPGTGVGNRQAQIDSPRGSNGSIVQKSPRRYSYDRPLLHITPGASPLPTHNHSPRVR).

It belongs to the protein kinase superfamily. Ser/Thr protein kinase family. In terms of assembly, interacts with the Xanthomonas campestris effector XopAC/AvrAC. In terms of tissue distribution, strongly expressed in leaves, moderately in flowers, and barely in roots.

It is found in the cell membrane. The protein localises to the nucleus. The enzyme catalyses L-seryl-[protein] + ATP = O-phospho-L-seryl-[protein] + ADP + H(+). It catalyses the reaction L-threonyl-[protein] + ATP = O-phospho-L-threonyl-[protein] + ADP + H(+). Its function is as follows. May be involved in plant defense signaling. This Arabidopsis thaliana (Mouse-ear cress) protein is Probable serine/threonine-protein kinase PBL3.